We begin with the raw amino-acid sequence, 136 residues long: Large ribosomal subunit protein uL16c (136 aa).

It belongs to the universal ribosomal protein uL16 family. As to quaternary structure, part of the 50S ribosomal subunit.

It localises to the plastid. The protein localises to the chloroplast. The chain is Large ribosomal subunit protein uL16c from Zea mays (Maize).